The primary structure comprises 296 residues: 4-hydroxybenzoate octaprenyltransferase (296 aa).

8 helical membrane-spanning segments follow: residues Pro28 to Gly48, Leu52 to Ile72, Ala102 to Ser122, Thr145 to Ala167, Ser174 to Val196, Asn219 to Phe239, Leu241 to Trp261, and Phe275 to Phe295.

Belongs to the UbiA prenyltransferase family. Mg(2+) is required as a cofactor.

The protein localises to the cell inner membrane. It catalyses the reaction all-trans-octaprenyl diphosphate + 4-hydroxybenzoate = 4-hydroxy-3-(all-trans-octaprenyl)benzoate + diphosphate. It participates in cofactor biosynthesis; ubiquinone biosynthesis. Catalyzes the prenylation of para-hydroxybenzoate (PHB) with an all-trans polyprenyl group. Mediates the second step in the final reaction sequence of ubiquinone-8 (UQ-8) biosynthesis, which is the condensation of the polyisoprenoid side chain with PHB, generating the first membrane-bound Q intermediate 3-octaprenyl-4-hydroxybenzoate. The sequence is that of 4-hydroxybenzoate octaprenyltransferase from Pseudomonas putida (strain GB-1).